The sequence spans 54 residues: Lectin alpha-1 chain (54 aa).

The protein belongs to the leguminous lectin family. In terms of assembly, tetramer of two alpha and two beta chains.

The protein is Lectin alpha-1 chain of Lathyrus hirsutus (Rough pea).